The primary structure comprises 266 residues: UPF0354 protein lwe1624 (266 aa).

The protein belongs to the UPF0354 family.

The chain is UPF0354 protein lwe1624 from Listeria welshimeri serovar 6b (strain ATCC 35897 / DSM 20650 / CCUG 15529 / CIP 8149 / NCTC 11857 / SLCC 5334 / V8).